A 36-amino-acid chain; its full sequence is Photosystem I reaction center subunit VIII (36 aa).

The chain crosses the membrane as a helical span at residues 9 to 29 (ILVPLVGLIFPAIAMTSLFIY).

This sequence belongs to the PsaI family.

The protein localises to the plastid. It localises to the chloroplast thylakoid membrane. Its function is as follows. May help in the organization of the PsaL subunit. This is Photosystem I reaction center subunit VIII from Tupiella akineta (Green alga).